Consider the following 509-residue polypeptide: Probable cytochrome P450 4ac3 (509 aa).

Cysteine 454 serves as a coordination point for heme.

Belongs to the cytochrome P450 family. Heme serves as cofactor.

It is found in the endoplasmic reticulum membrane. The protein resides in the microsome membrane. Its function is as follows. May be involved in the metabolism of insect hormones and in the breakdown of synthetic insecticides. The sequence is that of Probable cytochrome P450 4ac3 (Cyp4ac3) from Drosophila melanogaster (Fruit fly).